The chain runs to 458 residues: Divalent metal cation transporter MntH (458 aa).

Transmembrane regions (helical) follow at residues 38 to 58, 86 to 106, 119 to 139, 151 to 171, 180 to 200, 223 to 243, 275 to 295, 315 to 335, 370 to 390, 395 to 415, and 436 to 456; these read GFWK…VGYM, LIAM…GMDL, GIFL…AEII, IPLL…LLLM, AIVA…VILA, MLFL…LYLH, LTIA…MFYG, IVGS…LLAS, GLSI…EAQV, IYSQ…LTLF, and WFVT…TVGL.

It belongs to the NRAMP family.

Its subcellular location is the cell membrane. H(+)-stimulated, divalent metal cation uptake system. The polypeptide is Divalent metal cation transporter MntH (Latilactobacillus sakei subsp. sakei (strain 23K) (Lactobacillus sakei subsp. sakei)).